The sequence spans 100 residues: Large ribosomal subunit protein uL23 (100 aa).

The protein belongs to the universal ribosomal protein uL23 family. Part of the 50S ribosomal subunit. Contacts protein L29, and trigger factor when it is bound to the ribosome.

In terms of biological role, one of the early assembly proteins it binds 23S rRNA. One of the proteins that surrounds the polypeptide exit tunnel on the outside of the ribosome. Forms the main docking site for trigger factor binding to the ribosome. The polypeptide is Large ribosomal subunit protein uL23 (Pseudoalteromonas atlantica (strain T6c / ATCC BAA-1087)).